The chain runs to 406 residues: Aminomethyltransferase, mitochondrial (406 aa).

Residues 1–29 constitute a mitochondrion transit peptide; the sequence is MRGGLWQLGQSITRRLAQADKKTIGRRCF. E234, R265, and Y403 together coordinate substrate.

It belongs to the GcvT family. In terms of assembly, the glycine cleavage system is composed of four proteins: P, T, L and H.

It localises to the mitochondrion. The enzyme catalyses N(6)-[(R)-S(8)-aminomethyldihydrolipoyl]-L-lysyl-[protein] + (6S)-5,6,7,8-tetrahydrofolate = N(6)-[(R)-dihydrolipoyl]-L-lysyl-[protein] + (6R)-5,10-methylene-5,6,7,8-tetrahydrofolate + NH4(+). In terms of biological role, the glycine cleavage system catalyzes the degradation of glycine. This chain is Aminomethyltransferase, mitochondrial (GDCST), found in Solanum tuberosum (Potato).